The chain runs to 73 residues: UPF0154 protein MG335.1 (73 aa).

The chain crosses the membrane as a helical span at residues 6-26 (LALGLGIPLSLLVGMILGYFI).

Belongs to the UPF0154 family.

Its subcellular location is the membrane. The chain is UPF0154 protein MG335.1 from Mycoplasma genitalium (strain ATCC 33530 / DSM 19775 / NCTC 10195 / G37) (Mycoplasmoides genitalium).